We begin with the raw amino-acid sequence, 101 residues long: MSSEMIHVEVVYALPHEQRVLKLVVEQSATVEEIIRTSGILQMYPEIDLTVNKVGIFSRNVKLDARVRDKDRIEIYRPLLADPKEIRRKRAEQAKAAANQS.

This sequence belongs to the UPF0125 (RnfH) family.

This Vibrio cholerae serotype O1 (strain ATCC 39315 / El Tor Inaba N16961) protein is UPF0125 protein VC_0850.